The following is a 582-amino-acid chain: Sulfite reductase [NADPH] hemoprotein beta-component (582 aa).

The segment covering 1-12 (MDLKVKVDRSRD) has biased composition (basic and acidic residues). The disordered stretch occupies residues 1 to 26 (MDLKVKVDRSRDVSQPLDKLGPDETL). The [4Fe-4S] cluster site is built by Cys-447, Cys-453, Cys-492, and Cys-496. Cys-496 provides a ligand contact to siroheme.

Belongs to the nitrite and sulfite reductase 4Fe-4S domain family. As to quaternary structure, alpha(8)-beta(8). The alpha component is a flavoprotein, the beta component is a hemoprotein. Requires siroheme as cofactor. [4Fe-4S] cluster serves as cofactor.

The catalysed reaction is hydrogen sulfide + 3 NADP(+) + 3 H2O = sulfite + 3 NADPH + 4 H(+). It functions in the pathway sulfur metabolism; hydrogen sulfide biosynthesis; hydrogen sulfide from sulfite (NADPH route): step 1/1. Component of the sulfite reductase complex that catalyzes the 6-electron reduction of sulfite to sulfide. This is one of several activities required for the biosynthesis of L-cysteine from sulfate. The polypeptide is Sulfite reductase [NADPH] hemoprotein beta-component (Afipia carboxidovorans (strain ATCC 49405 / DSM 1227 / KCTC 32145 / OM5) (Oligotropha carboxidovorans)).